A 535-amino-acid polypeptide reads, in one-letter code: High-affinity fructose transporter ght6 (535 aa).

At 1-9 (MAKILTIVM) the chain is on the cytoplasmic side. Residues 10–30 (LVFVSMAGWMFGADTGSIGGI) form a helical membrane-spanning segment. Residues 31–58 (TNMRDFQSRYADRYDPVTDTYSYSSARQ) lie on the Extracellular side of the membrane. A helical transmembrane segment spans residues 59-79 (GLLVGMVNTGTTVGCLLSSPL). The Cytoplasmic segment spans residues 80-87 (GDRFGKRK). The helical transmembrane segment at 88–108 (CIMGWTLVYITGVIVQLTTIP) threads the bilayer. Topologically, residues 109 to 112 (SWVQ) are extracellular. The chain crosses the membrane as a helical span at residues 113–133 (MMVAKIWTGLGIGALSVIAPG). The Cytoplasmic segment spans residues 134 to 144 (YQSESSPPHIR). Residues 145-165 (GAIVTTYQLFITLGIFIAACI) form a helical membrane-spanning segment. The Extracellular segment spans residues 166–181 (NMGTHKYTTHPEAQWR). Residues 182–202 (VPIGINLLWGILMFFGMLFLP) form a helical membrane-spanning segment. The Cytoplasmic segment spans residues 203–268 (ESPRYLAVKG…IFSNEIRYRT (66 aa)). A helical membrane pass occupies residues 269–287 (LLGMGVMAFQQLTGNNYFF). The Extracellular portion of the chain corresponds to 288 to 303 (YYGTQVFRGTGLNSPF). The helical transmembrane segment at 304 to 324 (LAALILDAVNFGCTFGAIFVL) threads the bilayer. Residues 325-330 (EYFGRR) are Cytoplasmic-facing. A helical transmembrane segment spans residues 331–351 (GPLIVGGVWQSICFFIYASVG). Topologically, residues 352–365 (DRALTRPNGTSNHR) are extracellular. Asparagine 359 is a glycosylation site (N-linked (GlcNAc...) asparagine). A helical membrane pass occupies residues 366 to 386 (AGAVMIVFSCLFIFSFAQTWA). At 387-406 (PAAYVIVGESYPIRYRSKCA) the chain is on the cytoplasmic side. Residues 407–427 (AVATASNWFWNFMISFFTPFI) form a helical membrane-spanning segment. Topologically, residues 428 to 434 (SNSIGFK) are extracellular. The helical transmembrane segment at 435–455 (YGYVFAACNLCAAIIIFLFAK) threads the bilayer. The Cytoplasmic segment spans residues 456-535 (ETKGLTLEEI…PQQVTNPVGL (80 aa)). Residues 484 to 508 (DREDIKQSDSEKERGPTSKLHEYVE) show a composition bias toward basic and acidic residues. Positions 484–535 (DREDIKQSDSEKERGPTSKLHEYVEHAPNSYASTHSTESENYPQQVTNPVGL) are disordered. Positions 513 to 535 (SYASTHSTESENYPQQVTNPVGL) are enriched in polar residues.

The protein belongs to the major facilitator superfamily. Sugar transporter (TC 2.A.1.1) family.

Its subcellular location is the membrane. In terms of biological role, high-affinity fructose transporter. The protein is High-affinity fructose transporter ght6 (ght6) of Schizosaccharomyces pombe (strain 972 / ATCC 24843) (Fission yeast).